Consider the following 958-residue polypeptide: UvrABC system protein A (958 aa).

The ABC transporter 1 domain maps to 1-232 (MQSKSIKIQG…IETALKLGEG (232 aa)). ATP is bound at residue 33–40 (GLSGSGKS). The C4-type zinc-finger motif lies at 252 to 279 (CPICGFSIGELEPRLFSFNSPFGACPSC). ABC transporter domains are found at residues 315 to 593 (QYYP…KYLS) and 604 to 935 (RRKP…GKYL). Position 639-646 (639-646 (GVSGSGKS)) interacts with ATP. The C4-type zinc-finger motif lies at 738-764 (CEACRGDGILKIEMHFLPDVYVPCEVC).

It belongs to the ABC transporter superfamily. UvrA family. As to quaternary structure, forms a heterotetramer with UvrB during the search for lesions.

It is found in the cytoplasm. Functionally, the UvrABC repair system catalyzes the recognition and processing of DNA lesions. UvrA is an ATPase and a DNA-binding protein. A damage recognition complex composed of 2 UvrA and 2 UvrB subunits scans DNA for abnormalities. When the presence of a lesion has been verified by UvrB, the UvrA molecules dissociate. This Oceanobacillus iheyensis (strain DSM 14371 / CIP 107618 / JCM 11309 / KCTC 3954 / HTE831) protein is UvrABC system protein A.